The chain runs to 651 residues: Histone-arginine methyltransferase CARM1 (651 aa).

Residues 28–139 (ATVSVFPGAR…GHTLERSVFS (112 aa)) form an interaction with C9orf72 region. The SAM-dependent MTase PRMT-type domain maps to 147 to 454 (AVQYFQFYGY…KRQSYDISIV (308 aa)). S-adenosyl-L-methionine is bound by residues Gln-160, Arg-169, Gly-193, and Glu-215. Ser-217 bears the Phosphoserine mark. Lys-228 is covalently cross-linked (Glycyl lysine isopeptide (Lys-Gly) (interchain with G-Cter in ubiquitin)). Glu-244 and Ser-272 together coordinate S-adenosyl-L-methionine. The tract at residues 347–380 (RILMAKSVKYTVNFLEAKEGDLHRIEIPFKFHML) is required for nuclear translocation. Positions 500–651 (TGSTYNLSSG…IPTNTMHYGS (152 aa)) are transactivation domain. Arg-551 carries the post-translational modification Dimethylated arginine. The tract at residues 581-617 (RSSYQWGPGRLRGHAGSSVPMTCPTGSSGAQGGGGSS) is disordered.

It belongs to the class I-like SAM-binding methyltransferase superfamily. Protein arginine N-methyltransferase family. In terms of assembly, homodimer. Interacts with NR1H4. Interacts with SNRPC. Interacts with the C-terminus of NCOA2/GRIP1, NCO3/ACTR and NCOA1/SRC1. Part of a complex consisting of CARM1, EP300/P300 and NCOA2/GRIP1. Interacts with FLII, TP53, myogenic factor MEF2, EP300/P300, TRIM24, CREBBP and CTNNB1. Interacts with RELA. Identified in a complex containing CARM1, TRIM24 and NCOA2/GRIP1. Interacts with NCOA3/SRC3. Interacts with SKP2. Interacts (via PH domain-like fold) with C9orf72. Interacts with PARP1; promoting PARP1 recruimtent to replication forks. Auto-methylated on Arg-551. Methylation enhances transcription coactivator activity. Methylation is required for its role in the regulation of pre-mRNA alternative splicing. In terms of processing, phosphorylation at Ser-217 interferes with S-adenosyl-L-methionine binding and strongly reduces methyltransferase activity. Phosphorylation at Ser-217 is strongly increased during mitosis, and decreases rapidly to a very low, basal level after entry into the G1 phase of the cell cycle. Phosphorylation at Ser-217 may promote location in the cytosol. Post-translationally, ubiquitinated by E3 ubiquitin-protein ligase complex containing FBXO9 at Lys-228; leading to proteasomal degradation. As to expression, isoform 1 is expressed at low levels in brain, liver and testis. In terms of tissue distribution, isoform 2 is highly expressed in brain, liver, skeletal muscle and testis. Isoform 3 is highly expressed in spleen, liver and kidney. As to expression, isoform 4 is expressed in spleen, liver and kidney.

Its subcellular location is the nucleus. It localises to the cytoplasm. The protein resides in the chromosome. The catalysed reaction is L-arginyl-[protein] + 2 S-adenosyl-L-methionine = N(omega),N(omega)-dimethyl-L-arginyl-[protein] + 2 S-adenosyl-L-homocysteine + 2 H(+). With respect to regulation, methylation of H3R17 (H3R17me) by CARM1 is stimulated by preacetylation of H3 'Lys-18' (H3K18ac) H3 'Lys-23' (H3K23ac) by EP300 and blocked by citrullination of H3 'Arg-17' (H3R17ci) by PADI4. Functionally, methylates (mono- and asymmetric dimethylation) the guanidino nitrogens of arginyl residues in several proteins involved in DNA packaging, transcription regulation, pre-mRNA splicing, and mRNA stability. Recruited to promoters upon gene activation together with histone acetyltransferases from EP300/P300 and p160 families, methylates histone H3 at 'Arg-17' (H3R17me), forming mainly asymmetric dimethylarginine (H3R17me2a), leading to activation of transcription via chromatin remodeling. During nuclear hormone receptor activation and TCF7L2/TCF4 activation, acts synergically with EP300/P300 and either one of the p160 histone acetyltransferases NCOA1/SRC1, NCOA2/GRIP1 and NCOA3/ACTR or CTNNB1/beta-catenin to activate transcription. During myogenic transcriptional activation, acts together with NCOA3/ACTR as a coactivator for MEF2C. During monocyte inflammatory stimulation, acts together with EP300/P300 as a coactivator for NF-kappa-B. Acts as a coactivator for PPARG, promotes adipocyte differentiation and the accumulation of brown fat tissue. Plays a role in the regulation of pre-mRNA alternative splicing by methylation of splicing factors. Also seems to be involved in p53/TP53 transcriptional activation. Methylates EP300/P300, both at 'Arg-2142', which may loosen its interaction with NCOA2/GRIP1, and at 'Arg-580' and 'Arg-604' in the KIX domain, which impairs its interaction with CREB and inhibits CREB-dependent transcriptional activation. Also methylates arginine residues in RNA-binding proteins PABPC1, ELAVL1 and ELAV4, which may affect their mRNA-stabilizing properties and the half-life of their target mRNAs. Acts as a transcriptional coactivator of ACACA/acetyl-CoA carboxylase by enriching H3R17 methylation at its promoter, thereby positively regulating fatty acid synthesis. Independently of its methyltransferase activity, involved in replication fork progression: promotes PARP1 recruitment to replication forks, leading to poly-ADP-ribosylation of chromatin at replication forks and reduced fork speed. In terms of biological role, isoform 3 specifically affects pre-mRNA splicing. This activity is independent from methyltransferase activity. This is Histone-arginine methyltransferase CARM1 (Carm1) from Rattus norvegicus (Rat).